We begin with the raw amino-acid sequence, 891 residues long: Nitrate reductase [NAD(P)H] (891 aa).

Positions 1 to 78 are disordered; the sequence is MAASVEYNRQ…VKDPRDEATS (78 aa). The segment covering 63–76 has biased composition (basic and acidic residues); the sequence is LDVEPSVKDPRDEA. Cys-168 lines the Mo-molybdopterin pocket. One can recognise a Cytochrome b5 heme-binding domain in the interval 515-590; sequence SAQFTMSEVR…LEMYRVGELI (76 aa). Heme is bound by residues His-550 and His-573. Positions 630–742 constitute an FAD-binding FR-type domain; it reads REKVRCRLVD…KGPVGHIEYA (113 aa). Residues 682–685, 699–703, Phe-704, Phe-711, 716–718, and Thr-769 contribute to the FAD site; these read RAYT, LIKIY, and LMS.

It belongs to the nitrate reductase family. In terms of assembly, homodimer. It depends on FAD as a cofactor. Heme serves as cofactor. Requires Mo-molybdopterin as cofactor.

It catalyses the reaction nitrite + NAD(+) + H2O = nitrate + NADH + H(+). The enzyme catalyses nitrite + NADP(+) + H2O = nitrate + NADPH + H(+). Functionally, nitrate reductase is a key enzyme involved in the first step of nitrate assimilation in plants, fungi and bacteria. In Hordeum vulgare (Barley), this protein is Nitrate reductase [NAD(P)H] (NAR-7).